A 407-amino-acid chain; its full sequence is Tryptophan synthase beta chain (407 aa).

Lys-86 carries the N6-(pyridoxal phosphate)lysine modification.

It belongs to the TrpB family. In terms of assembly, tetramer of two alpha and two beta chains. The cofactor is pyridoxal 5'-phosphate.

The catalysed reaction is (1S,2R)-1-C-(indol-3-yl)glycerol 3-phosphate + L-serine = D-glyceraldehyde 3-phosphate + L-tryptophan + H2O. It functions in the pathway amino-acid biosynthesis; L-tryptophan biosynthesis; L-tryptophan from chorismate: step 5/5. Its function is as follows. The beta subunit is responsible for the synthesis of L-tryptophan from indole and L-serine. This is Tryptophan synthase beta chain from Shewanella woodyi (strain ATCC 51908 / MS32).